The primary structure comprises 399 residues: Acetate kinase (399 aa).

Asn-7 is a Mg(2+) binding site. Residue Lys-14 participates in ATP binding. Arg-89 contacts substrate. Asp-146 (proton donor/acceptor) is an active-site residue. ATP-binding positions include 206-210 (HIGSG), 280-282 (DFR), and 328-332 (GIGEN). Position 382 (Glu-382) interacts with Mg(2+).

It belongs to the acetokinase family. As to quaternary structure, homodimer. Mg(2+) is required as a cofactor. It depends on Mn(2+) as a cofactor.

It localises to the cytoplasm. The catalysed reaction is acetate + ATP = acetyl phosphate + ADP. The protein operates within metabolic intermediate biosynthesis; acetyl-CoA biosynthesis; acetyl-CoA from acetate: step 1/2. Functionally, catalyzes the formation of acetyl phosphate from acetate and ATP. Can also catalyze the reverse reaction. This Campylobacter hominis (strain ATCC BAA-381 / DSM 21671 / CCUG 45161 / LMG 19568 / NCTC 13146 / CH001A) protein is Acetate kinase.